A 143-amino-acid chain; its full sequence is 3-dehydroquinate dehydratase (143 aa).

Tyr-22 acts as the Proton acceptor in catalysis. The substrate site is built by Asn-73, His-79, and Asp-86. The active-site Proton donor is the His-99. Residues 100–101 and Arg-110 each bind substrate; that span reads IS.

The protein belongs to the type-II 3-dehydroquinase family. As to quaternary structure, homododecamer.

The enzyme catalyses 3-dehydroquinate = 3-dehydroshikimate + H2O. It functions in the pathway metabolic intermediate biosynthesis; chorismate biosynthesis; chorismate from D-erythrose 4-phosphate and phosphoenolpyruvate: step 3/7. Catalyzes a trans-dehydration via an enolate intermediate. This chain is 3-dehydroquinate dehydratase, found in Mycolicibacterium paratuberculosis (strain ATCC BAA-968 / K-10) (Mycobacterium paratuberculosis).